The sequence spans 598 residues: Chaperone protein DnaK (598 aa).

Threonine 175 carries the post-translational modification Phosphothreonine; by autocatalysis. Residues 571–591 (AKSAAASSNKDDSLNNNSSSN) are compositionally biased toward low complexity. A disordered region spans residues 571–598 (AKSAAASSNKDDSLNNNSSSNNDEETFE).

It belongs to the heat shock protein 70 family.

Functionally, acts as a chaperone. This Mycoplasmopsis agalactiae (strain NCTC 10123 / CIP 59.7 / PG2) (Mycoplasma agalactiae) protein is Chaperone protein DnaK.